The sequence spans 243 residues: Large ribosomal subunit protein uL2 (243 aa).

Disordered regions lie at residues 1-23 (MGKRIRPQRLGRGGPTYRAPSHR) and 204-243 (PFGGGNHQSPGKPTTIARGDPPGRKVGHIAARKTGRGGRR). Positions 228–243 (KVGHIAARKTGRGGRR) are enriched in basic residues.

The protein belongs to the universal ribosomal protein uL2 family. Part of the 50S ribosomal subunit. Forms a bridge to the 30S subunit in the 70S ribosome.

One of the primary rRNA binding proteins. Required for association of the 30S and 50S subunits to form the 70S ribosome, for tRNA binding and peptide bond formation. It has been suggested to have peptidyltransferase activity; this is somewhat controversial. Makes several contacts with the 16S rRNA in the 70S ribosome. This is Large ribosomal subunit protein uL2 from Methanopyrus kandleri (strain AV19 / DSM 6324 / JCM 9639 / NBRC 100938).